Consider the following 83-residue polypeptide: Turripeptide Lol11.2 (83 aa).

The signal sequence occupies residues 1-27 (MARLMMTVGCLIFIVVLLDMMVPVSNT).

This sequence belongs to the conopeptide I2-like superfamily. Contains 4 disulfide bonds. Expressed by the venom duct.

It is found in the secreted. Its function is as follows. Acts as a neurotoxin by inhibiting voltage-gated potassium channels (Kv). This Iotyrris olangoensis (Sea snail) protein is Turripeptide Lol11.2.